The primary structure comprises 284 residues: 2-dehydro-3-deoxyphosphooctonate aldolase (284 aa).

It belongs to the KdsA family.

The protein resides in the cytoplasm. It carries out the reaction D-arabinose 5-phosphate + phosphoenolpyruvate + H2O = 3-deoxy-alpha-D-manno-2-octulosonate-8-phosphate + phosphate. It participates in carbohydrate biosynthesis; 3-deoxy-D-manno-octulosonate biosynthesis; 3-deoxy-D-manno-octulosonate from D-ribulose 5-phosphate: step 2/3. Its pathway is bacterial outer membrane biogenesis; lipopolysaccharide biosynthesis. The chain is 2-dehydro-3-deoxyphosphooctonate aldolase from Actinobacillus pleuropneumoniae serotype 7 (strain AP76).